Here is a 612-residue protein sequence, read N- to C-terminus: Amyloid-beta precursor-like protein (612 aa).

Residues 1–21 form the signal peptide; that stretch reads MGPSVRPGFLVVVIGLQFVAA. The Extracellular segment spans residues 22–542; it reads SMEVNSRKFE…NLYANSHANS (521 aa). Residues 28–122 are GFLD subdomain; it reads RKFEPMVAFI…PFRCLVGPFQ (95 aa). In terms of domain architecture, E1 spans 28–189; the sequence is RKFEPMVAFI…SGVEFVCCPK (162 aa). 6 cysteine pairs are disulfide-bonded: cysteine 38-cysteine 60, cysteine 71-cysteine 116, cysteine 96-cysteine 103, cysteine 132-cysteine 187, cysteine 143-cysteine 173, and cysteine 157-cysteine 186. N-linked (GlcNAc...) asparagine glycosylation is found at asparagine 99, asparagine 108, and asparagine 150. Residues 130–189 are cuBD subdomain; that stretch reads EHCIFDHYHDPRVCNEFDQCNETAMSKCSARGMTTQSFAMLWPCQEPGHFSGVEFVCCPK. In terms of domain architecture, E2 spans 223–419; it reads GDSKYMSKYA…KQVRPNIDKF (197 aa). 2 disordered regions span residues 251–276 and 437–490; these read ERDT…TDPK and QEPT…FDSE. Basic and acidic residues-rich tracts occupy residues 439–453 and 470–483; these read PTPK…KAED and KPTE…EDIK. Residues 543 to 563 traverse the membrane as a helical segment; the sequence is VLGIAIGGVVVFIIIVVAVVM. Residues 564–612 lie on the Cytoplasmic side of the membrane; sequence LKRRTQRQRVTHGFVEVDPAASPEERHVANMQMSGYENPTYKYFEMQNQ. The interval 598–612 is required for the interaction with kinesin heavy chain and for anterograde transport in axons; it reads GYENPTYKYFEMQNQ. A YENPXY motif motif is present at residues 599–604; that stretch reads YENPTY.

Belongs to the APP family. Interacts (via cytoplasmic domain) with kinesin heavy chain. Expressed in the cervicothoracic ganglion (stellate ganglion) (at protein level).

The protein resides in the cell membrane. Its subcellular location is the cell projection. The protein localises to the axon. Its function is as follows. Acts as a kinesin I membrane receptor, thereby playing a role in axonal anterograde transport of cargo towards synapses in axons. This is Amyloid-beta precursor-like protein from Doryteuthis pealeii (Longfin inshore squid).